We begin with the raw amino-acid sequence, 146 residues long: Small ribosomal subunit protein bS6 (146 aa).

Residues 100–146 form a disordered region; the sequence is QSAMMRKRDDDDRGDRPDRGDRGRGPRPDRPPRRPRDDAAASDEGGF. A compositionally biased stretch (basic and acidic residues) spans 105–138; it reads RKRDDDDRGDRPDRGDRGRGPRPDRPPRRPRDDA.

This sequence belongs to the bacterial ribosomal protein bS6 family.

Binds together with bS18 to 16S ribosomal RNA. This is Small ribosomal subunit protein bS6 from Methylocella silvestris (strain DSM 15510 / CIP 108128 / LMG 27833 / NCIMB 13906 / BL2).